Consider the following 359-residue polypeptide: UDP-N-acetylglucosamine--N-acetylmuramyl-(pentapeptide) pyrophosphoryl-undecaprenol N-acetylglucosamine transferase (359 aa).

Residues 15 to 17, asparagine 127, arginine 164, serine 192, isoleucine 246, 265 to 270, and glutamine 290 each bind UDP-N-acetyl-alpha-D-glucosamine; these read SGG and ALTVSE.

It belongs to the glycosyltransferase 28 family. MurG subfamily.

The protein resides in the cell membrane. The catalysed reaction is di-trans,octa-cis-undecaprenyl diphospho-N-acetyl-alpha-D-muramoyl-L-alanyl-D-glutamyl-meso-2,6-diaminopimeloyl-D-alanyl-D-alanine + UDP-N-acetyl-alpha-D-glucosamine = di-trans,octa-cis-undecaprenyl diphospho-[N-acetyl-alpha-D-glucosaminyl-(1-&gt;4)]-N-acetyl-alpha-D-muramoyl-L-alanyl-D-glutamyl-meso-2,6-diaminopimeloyl-D-alanyl-D-alanine + UDP + H(+). It participates in cell wall biogenesis; peptidoglycan biosynthesis. Functionally, cell wall formation. Catalyzes the transfer of a GlcNAc subunit on undecaprenyl-pyrophosphoryl-MurNAc-pentapeptide (lipid intermediate I) to form undecaprenyl-pyrophosphoryl-MurNAc-(pentapeptide)GlcNAc (lipid intermediate II). This Wigglesworthia glossinidia brevipalpis protein is UDP-N-acetylglucosamine--N-acetylmuramyl-(pentapeptide) pyrophosphoryl-undecaprenol N-acetylglucosamine transferase.